The following is a 523-amino-acid chain: 2-isopropylmalate synthase (523 aa).

A Pyruvate carboxyltransferase domain is found at 5–267 (VIIFDTTLRD…HTAINHQEIW (263 aa)). Residues Asp14, His202, His204, and Asn238 each coordinate Mn(2+). Residues 392 to 523 (RLDYFSVQSS…QHNENNKETV (132 aa)) are regulatory domain.

Belongs to the alpha-IPM synthase/homocitrate synthase family. LeuA type 1 subfamily. Homodimer. The cofactor is Mn(2+).

The protein resides in the cytoplasm. It carries out the reaction 3-methyl-2-oxobutanoate + acetyl-CoA + H2O = (2S)-2-isopropylmalate + CoA + H(+). It functions in the pathway amino-acid biosynthesis; L-leucine biosynthesis; L-leucine from 3-methyl-2-oxobutanoate: step 1/4. Catalyzes the condensation of the acetyl group of acetyl-CoA with 3-methyl-2-oxobutanoate (2-ketoisovalerate) to form 3-carboxy-3-hydroxy-4-methylpentanoate (2-isopropylmalate). The polypeptide is 2-isopropylmalate synthase (Shigella dysenteriae serotype 1 (strain Sd197)).